The primary structure comprises 53 residues: Small, acid-soluble spore protein O (53 aa).

The disordered stretch occupies residues 1 to 53 (MVRKKANHSRPGMNAAKAQGKDAGLTSQFHAEIGQEPLNQAQRQNNKKRKKNQ).

It belongs to the SspO family.

The protein resides in the spore core. This Halalkalibacterium halodurans (strain ATCC BAA-125 / DSM 18197 / FERM 7344 / JCM 9153 / C-125) (Bacillus halodurans) protein is Small, acid-soluble spore protein O.